Consider the following 290-residue polypeptide: Acetylglutamate kinase (290 aa).

Residues 65–66 (GG), Arg-87, and Asn-186 each bind substrate.

Belongs to the acetylglutamate kinase family. ArgB subfamily.

It is found in the cytoplasm. It catalyses the reaction N-acetyl-L-glutamate + ATP = N-acetyl-L-glutamyl 5-phosphate + ADP. The protein operates within amino-acid biosynthesis; L-arginine biosynthesis; N(2)-acetyl-L-ornithine from L-glutamate: step 2/4. Its function is as follows. Catalyzes the ATP-dependent phosphorylation of N-acetyl-L-glutamate. This is Acetylglutamate kinase from Mycobacterium sp. (strain KMS).